Consider the following 569-residue polypeptide: 3-oxosteroid 1-dehydrogenase (569 aa).

FAD is bound at residue 10 to 39; the sequence is DVVVVGSGAAGMVAALTAAHQGLSTVVVEK. The interval 127–148 is disordered; that stretch reads PGGKPTGRSVEPKPFDANKLGP.

This sequence belongs to the FAD-dependent oxidoreductase 2 family. 3-oxosteroid dehydrogenase subfamily. The cofactor is FAD.

It catalyses the reaction a 3-oxosteroid + A = a 3-oxo-Delta(1)-steroid + AH2. It carries out the reaction a 3-oxo-Delta(4)-steroid + A = a 3-oxo-Delta(1,4)-steroid + AH2. Functionally, catalyzes the elimination of the C-1 and C-2 hydrogen atoms of the A-ring from the polycyclic ring structure of 3-ketosteroids. Is also involved in the formation of 1,4-androstadiene-3,17-dione (ADD) from 4-androstene-3,17-dione (AD) to. This Mycolicibacterium smegmatis (strain ATCC 700084 / mc(2)155) (Mycobacterium smegmatis) protein is 3-oxosteroid 1-dehydrogenase (ksdD).